Here is a 432-residue protein sequence, read N- to C-terminus: Beta-fructosidase (432 aa).

Substrate-binding positions include Trp14–Asp17, Gln33, Trp41, Phe74–Ser75, Tyr92, Arg137–Asp138, Glu188–Glu190, Thr208, and Trp260. Asp17 is a catalytic residue.

Belongs to the glycosyl hydrolase 32 family.

The catalysed reaction is Hydrolysis of terminal non-reducing beta-D-fructofuranoside residues in beta-D-fructofuranosides.. Its function is as follows. Hydrolysis of sucrose, raffinose, inulin and levan. Specific for the fructose moiety and the beta-anomeric configuration of the glycosidic linkages of its substrates. The enzyme released fructose from sucrose and raffinose, and the fructose polymer inulin is hydrolyzed quantitatively in an exo-type fashion. The chain is Beta-fructosidase (bfrA) from Thermotoga maritima (strain ATCC 43589 / DSM 3109 / JCM 10099 / NBRC 100826 / MSB8).